Consider the following 299-residue polypeptide: MSESNRLRIAIQKSGRLSKESQKLLKSCGIKFNVNEQRLIAHSDNMPIDLLRVRDDDIPGLVMDGVVDLGIIGENVLEEEQIERQTLDKPSECIKLRQLDFGACRLSLAVPTEFRYQDASSLEGLRIATSYPNLLRRYMQEKGISYRDCMLKGSVEVAPRAGLADGICDLVSTGATLEANGLYETEVIYRSMACIIQSTQEQSEAKQALIDKILSRVNGVVRAKESKYILLHAPTETLDQIVALLPGAENPTVLPLNDDTNRVAIHAVSSEDLFWDTMEALTQLGASSILVMPIEKMMG.

It belongs to the ATP phosphoribosyltransferase family. Long subfamily. Mg(2+) serves as cofactor.

The protein localises to the cytoplasm. The catalysed reaction is 1-(5-phospho-beta-D-ribosyl)-ATP + diphosphate = 5-phospho-alpha-D-ribose 1-diphosphate + ATP. It functions in the pathway amino-acid biosynthesis; L-histidine biosynthesis; L-histidine from 5-phospho-alpha-D-ribose 1-diphosphate: step 1/9. Its activity is regulated as follows. Feedback inhibited by histidine. In terms of biological role, catalyzes the condensation of ATP and 5-phosphoribose 1-diphosphate to form N'-(5'-phosphoribosyl)-ATP (PR-ATP). Has a crucial role in the pathway because the rate of histidine biosynthesis seems to be controlled primarily by regulation of HisG enzymatic activity. The sequence is that of ATP phosphoribosyltransferase from Shewanella loihica (strain ATCC BAA-1088 / PV-4).